Here is a 792-residue protein sequence, read N- to C-terminus: Chloride channel protein CLC-d (792 aa).

12 helical membrane passes run 78 to 98, 119 to 139, 170 to 190, 195 to 215, 237 to 257, 267 to 287, 320 to 340, 361 to 381, 451 to 471, 474 to 494, 508 to 528, and 529 to 549; these read FFSL…NLSV, AGFI…AYII, RTLI…LALG, LVHT…TKYH, GCAA…LFAL, QLMW…RTAM, LLPM…FNQL, IIEA…LPLL, LLTF…TAVP, QFVP…MFVV, ALLG…SLCV, and IMVE…VLLI. CBS domains are found at residues 592 to 652 and 704 to 761; these read QSQK…KVDF and LNPS…SSAV. The helical transmembrane segment at 731–751 threads the bilayer; sequence HLFVVPRPSRVIGLITRKDLL.

It belongs to the chloride channel (TC 2.A.49) family. As to quaternary structure, homodimer. In terms of tissue distribution, broadly expressed in the plant, but predominantly in the silique.

The protein localises to the membrane. In terms of biological role, voltage-gated chloride channel. This is Chloride channel protein CLC-d (CLC-D) from Arabidopsis thaliana (Mouse-ear cress).